Reading from the N-terminus, the 355-residue chain is Glutamine synthetase root isozyme 4 (355 aa).

Positions 19–99 constitute a GS beta-grasp domain; sequence IIAEYIWIGG…VMCDCYTPAG (81 aa). The disordered stretch occupies residues 37-66; that stretch reads ARTLPGPVTDPSKLPKWNYDGSSTGQAPGE. Residues 106-355 enclose the GS catalytic domain; that stretch reads KRYSAAKIFS…IAETTIVWKP (250 aa).

This sequence belongs to the glutamine synthetase family. In terms of assembly, homooctamer. Found in all the tissues examined with higher expression found in tissues of the root, stem and seedling shoot.

It is found in the cytoplasm. The enzyme catalyses L-glutamate + NH4(+) + ATP = L-glutamine + ADP + phosphate + H(+). Functionally, plays a role in the flow of nitrogen into nitrogenous organic compounds. The polypeptide is Glutamine synthetase root isozyme 4 (GLN5) (Zea mays (Maize)).